We begin with the raw amino-acid sequence, 146 residues long: Type II secretion system core protein G (146 aa).

Residues 1-9 constitute a propeptide, leader sequence; that stretch reads MKKMRKQTG. F10 is modified (N-methylphenylalanine). A helical membrane pass occupies residues 10–30; it reads FTLLEVMVVVVILGILASFVV.

It belongs to the GSP G family. As to quaternary structure, type II secretion system is composed of four main components: the outer membrane complex, the inner membrane complex, the cytoplasmic secretion ATPase and the periplasm-spanning pseudopilus. Forms homomultimers. Interacts with EspL. Post-translationally, cleaved by the prepilin peptidase. In terms of processing, methylated by prepilin peptidase at the amino group of the N-terminal phenylalanine once the leader sequence is cleaved.

Its subcellular location is the cell inner membrane. In terms of biological role, core component of the type II secretion system required for the energy-dependent secretion of extracellular factors such as proteases and toxins from the periplasm. Pseudopilin (pilin-like) protein that polymerizes to form the pseudopilus. Further polymerization triggers pseudopilus growth. The chain is Type II secretion system core protein G (epsG) from Vibrio cholerae serotype O1 (strain ATCC 39315 / El Tor Inaba N16961).